A 259-amino-acid polypeptide reads, in one-letter code: Undecaprenyl-diphosphatase 3 (259 aa).

8 helical membrane passes run 1 to 21, 39 to 59, 71 to 91, 99 to 119, 133 to 153, 174 to 194, 208 to 228, and 239 to 259; these read MNWL…FLPI, AGLF…FIYY, FSKL…IGLL, ISKT…FLYM, ITYK…FPAI, AYFS…LQFV, SLIV…SWMI, and FAYY…TDVF.

This sequence belongs to the UppP family.

The protein resides in the cell membrane. It carries out the reaction di-trans,octa-cis-undecaprenyl diphosphate + H2O = di-trans,octa-cis-undecaprenyl phosphate + phosphate + H(+). Its function is as follows. Catalyzes the dephosphorylation of undecaprenyl diphosphate (UPP). Confers resistance to bacitracin. The protein is Undecaprenyl-diphosphatase 3 of Bacillus cereus (strain ATCC 14579 / DSM 31 / CCUG 7414 / JCM 2152 / NBRC 15305 / NCIMB 9373 / NCTC 2599 / NRRL B-3711).